A 292-amino-acid polypeptide reads, in one-letter code: Phosphoribulokinase, chromosomal (292 aa).

Position 12 to 20 (12 to 20 (GSSGAGTTS)) interacts with ATP.

Belongs to the phosphoribulokinase family. As to quaternary structure, homooctamer.

It carries out the reaction D-ribulose 5-phosphate + ATP = D-ribulose 1,5-bisphosphate + ADP + H(+). Its pathway is carbohydrate biosynthesis; Calvin cycle. This Cupriavidus necator (strain ATCC 17699 / DSM 428 / KCTC 22496 / NCIMB 10442 / H16 / Stanier 337) (Ralstonia eutropha) protein is Phosphoribulokinase, chromosomal (cfxP).